The primary structure comprises 757 residues: Polyribonucleotide nucleotidyltransferase (757 aa).

2 residues coordinate Mg(2+): Asp-525 and Asp-531. The KH domain maps to Pro-591–Val-650. Residues Gly-662–Val-734 enclose the S1 motif domain. The disordered stretch occupies residues Glu-737–Gly-757.

The protein belongs to the polyribonucleotide nucleotidyltransferase family. It depends on Mg(2+) as a cofactor.

Its subcellular location is the cytoplasm. The enzyme catalyses RNA(n+1) + phosphate = RNA(n) + a ribonucleoside 5'-diphosphate. Functionally, involved in mRNA degradation. Catalyzes the phosphorolysis of single-stranded polyribonucleotides processively in the 3'- to 5'-direction. The chain is Polyribonucleotide nucleotidyltransferase from Clavibacter michiganensis subsp. michiganensis (strain NCPPB 382).